The primary structure comprises 146 residues: Hemoglobin subunit beta (146 aa).

At Val1 the chain carries N-acetylvaline. Residues 2-146 (HLTGEEKSAV…VANALAHKYH (145 aa)) enclose the Globin domain. Phosphothreonine is present on Thr12. Ser44 bears the Phosphoserine mark. N6-acetyllysine is present on Lys59. His63 lines the heme b pocket. Lys82 is subject to N6-acetyllysine. A heme b-binding site is contributed by His92. The residue at position 93 (Cys93) is an S-nitrosocysteine. Lys144 carries the post-translational modification N6-acetyllysine.

This sequence belongs to the globin family. As to quaternary structure, heterotetramer of two alpha chains and two beta chains. As to expression, red blood cells.

Functionally, involved in oxygen transport from the lung to the various peripheral tissues. The polypeptide is Hemoglobin subunit beta (HBB) (Leontocebus fuscicollis (Brown-mantled tamarin)).